The chain runs to 644 residues: ATP-dependent zinc metalloprotease FtsH (644 aa).

Residues 1 to 4 (MAKN) lie on the Cytoplasmic side of the membrane. A helical transmembrane segment spans residues 5-25 (LILWLVIAVVLMSVFQSFGPS). Over 26–98 (ESNGRKVDYS…VGEPPEEPSL (73 aa)) the chain is Periplasmic. The chain crosses the membrane as a helical span at residues 99–119 (LASIFISWFPMLLLIGVWIFF). Residues 120 to 644 (MRQMQGGGGK…NTMSEQLGDK (525 aa)) lie on the Cytoplasmic side of the membrane. 192–199 (GPPGTGKT) contributes to the ATP binding site. Histidine 414 is a binding site for Zn(2+). The active site involves glutamate 415. The Zn(2+) site is built by histidine 418 and aspartate 492. Residues 598 to 644 (VRPPAGWEEPGASNNAGDNGSPKAPRPVDEPRTPNPGNTMSEQLGDK) form a disordered region. Polar residues predominate over residues 632–644 (NPGNTMSEQLGDK).

In the central section; belongs to the AAA ATPase family. The protein in the C-terminal section; belongs to the peptidase M41 family. As to quaternary structure, homohexamer. It depends on Zn(2+) as a cofactor.

It is found in the cell inner membrane. Its function is as follows. Acts as a processive, ATP-dependent zinc metallopeptidase for both cytoplasmic and membrane proteins. Plays a role in the quality control of integral membrane proteins. The protein is ATP-dependent zinc metalloprotease FtsH of Escherichia coli O157:H7.